The primary structure comprises 216 residues: ATP-dependent Clp protease proteolytic subunit (216 aa).

S120 serves as the catalytic Nucleophile. H145 is an active-site residue.

This sequence belongs to the peptidase S14 family. Fourteen ClpP subunits assemble into 2 heptameric rings which stack back to back to give a disk-like structure with a central cavity, resembling the structure of eukaryotic proteasomes.

Its subcellular location is the cytoplasm. The enzyme catalyses Hydrolysis of proteins to small peptides in the presence of ATP and magnesium. alpha-casein is the usual test substrate. In the absence of ATP, only oligopeptides shorter than five residues are hydrolyzed (such as succinyl-Leu-Tyr-|-NHMec, and Leu-Tyr-Leu-|-Tyr-Trp, in which cleavage of the -Tyr-|-Leu- and -Tyr-|-Trp bonds also occurs).. Functionally, cleaves peptides in various proteins in a process that requires ATP hydrolysis. Has a chymotrypsin-like activity. Plays a major role in the degradation of misfolded proteins. This Cupriavidus pinatubonensis (strain JMP 134 / LMG 1197) (Cupriavidus necator (strain JMP 134)) protein is ATP-dependent Clp protease proteolytic subunit.